Here is a 147-residue protein sequence, read N- to C-terminus: uncharacterized protein (147 aa).

This is an uncharacterized protein from Escherichia coli.